The following is a 347-amino-acid chain: Holliday junction branch migration complex subunit RuvB (347 aa).

The tract at residues 1 to 182 is large ATPase domain (RuvB-L); the sequence is MSAQNPVLTP…FGIPVRLSFY (182 aa). ATP-binding positions include Leu-21, Arg-22, Gly-63, Lys-66, Thr-67, Thr-68, 129–131, Arg-172, Tyr-182, and Arg-219; that span reads EDF. Thr-67 lines the Mg(2+) pocket. Positions 183-253 are small ATPAse domain (RuvB-S); it reads TVEELELIVR…IADEALTRLL (71 aa). The head domain (RuvB-H) stretch occupies residues 256–347; that stretch reads NMGLDQLDTR…QFRLTLEDDD (92 aa). DNA-binding residues include Arg-292, Arg-311, and Arg-316.

The protein belongs to the RuvB family. As to quaternary structure, homohexamer. Forms an RuvA(8)-RuvB(12)-Holliday junction (HJ) complex. HJ DNA is sandwiched between 2 RuvA tetramers; dsDNA enters through RuvA and exits via RuvB. An RuvB hexamer assembles on each DNA strand where it exits the tetramer. Each RuvB hexamer is contacted by two RuvA subunits (via domain III) on 2 adjacent RuvB subunits; this complex drives branch migration. In the full resolvosome a probable DNA-RuvA(4)-RuvB(12)-RuvC(2) complex forms which resolves the HJ.

The protein resides in the cytoplasm. It catalyses the reaction ATP + H2O = ADP + phosphate + H(+). Functionally, the RuvA-RuvB-RuvC complex processes Holliday junction (HJ) DNA during genetic recombination and DNA repair, while the RuvA-RuvB complex plays an important role in the rescue of blocked DNA replication forks via replication fork reversal (RFR). RuvA specifically binds to HJ cruciform DNA, conferring on it an open structure. The RuvB hexamer acts as an ATP-dependent pump, pulling dsDNA into and through the RuvAB complex. RuvB forms 2 homohexamers on either side of HJ DNA bound by 1 or 2 RuvA tetramers; 4 subunits per hexamer contact DNA at a time. Coordinated motions by a converter formed by DNA-disengaged RuvB subunits stimulates ATP hydrolysis and nucleotide exchange. Immobilization of the converter enables RuvB to convert the ATP-contained energy into a lever motion, pulling 2 nucleotides of DNA out of the RuvA tetramer per ATP hydrolyzed, thus driving DNA branch migration. The RuvB motors rotate together with the DNA substrate, which together with the progressing nucleotide cycle form the mechanistic basis for DNA recombination by continuous HJ branch migration. Branch migration allows RuvC to scan DNA until it finds its consensus sequence, where it cleaves and resolves cruciform DNA. This Allorhizobium ampelinum (strain ATCC BAA-846 / DSM 112012 / S4) (Agrobacterium vitis (strain S4)) protein is Holliday junction branch migration complex subunit RuvB.